Reading from the N-terminus, the 33-residue chain is Brevinin-2DYb (33 aa).

Cysteine 27 and cysteine 33 are oxidised to a cystine.

In terms of tissue distribution, expressed by the skin glands.

Its subcellular location is the secreted. Antimicrobial peptide. Active against the Gram-positive bacterium S.aureus (MIC=30 uM) and the Gram-negative bacterium E.coli (MIC=30 uM). The chain is Brevinin-2DYb from Rana dybowskii (Dybovsky's frog).